Reading from the N-terminus, the 486-residue chain is Recombining binding protein suppressor of hairless (486 aa).

DNA-binding stretches follow at residues 43-53 (QKSYGNEKRFF) and 151-156 (SKPSKK). Residue lysine 161 is modified to N6-acetyllysine. The interval 178-183 (RLRSQT) is DNA-binding. Residues 341–431 (PVVESLQLNG…YSTSLTFTYT (91 aa)) enclose the IPT/TIG domain. Polar residues predominate over residues 451–467 (SSQVPPNESNTNSEGSY). The disordered stretch occupies residues 451 to 486 (SSQVPPNESNTNSEGSYTNASTNSTSVTSSTATVVS). Over residues 468 to 486 (TNASTNSTSVTSSTATVVS) the composition is skewed to low complexity.

The protein belongs to the Su(H) family. Interacts with activated NOTCH1, NOTCH2 or NOTCH3. Interacts with MINT/SHARP. This interaction may mediate the recruitment of large corepressor complexes containing proteins such as HDAC1, HDAC2, NCOR2, SAP30, FHL1/KYOT2 and CIR1. Interacts with EP300, MAML1 and PTF1A. Interacts with RITA1, leading to nuclear export, prevent the interaction between RBPJ and NICD product and subsequent down-regulation of the Notch signaling pathway. Interacts with SNW1. Interacts with CHCHD2 and CXXC5. Interacts with BEND6 (via BEN domain). Interacts with NKAPL. Interacts with ZMIZ1. Interacts with RBM15. Interacts with L3MBTL3 and KDM1A; the interaction with KDM1A is weaker in the absence of L3MBTL3 and the interaction with L3MBTL3 is impaired by Notch-derived peptides containing the intracellular domain (NICD).

It is found in the nucleus. The protein localises to the cytoplasm. Its function is as follows. Transcriptional regulator that plays a central role in Notch signaling, a signaling pathway involved in cell-cell communication that regulates a broad spectrum of cell-fate determinations. Acts as a transcriptional repressor when it is not associated with Notch proteins. When associated with some NICD product of Notch proteins (Notch intracellular domain), it acts as a transcriptional activator that activates transcription of Notch target genes. Probably represses or activates transcription via the recruitment of chromatin remodeling complexes containing histone deacetylase or histone acetylase proteins, respectively. Specifically binds to the immunoglobulin kappa-type J segment recombination signal sequence. Binds specifically to methylated DNA. Binds to the oxygen responsive element of COX4I2 and activates its transcription under hypoxia conditions (4% oxygen). Negatively regulates the phagocyte oxidative burst in response to bacterial infection by repressing transcription of NADPH oxidase subunits. This Pongo abelii (Sumatran orangutan) protein is Recombining binding protein suppressor of hairless (RBPJ).